A 122-amino-acid chain; its full sequence is Large ribosomal subunit protein uL14 (122 aa).

Belongs to the universal ribosomal protein uL14 family. As to quaternary structure, part of the 50S ribosomal subunit. Forms a cluster with proteins L3 and L19. In the 70S ribosome, L14 and L19 interact and together make contacts with the 16S rRNA in bridges B5 and B8.

Functionally, binds to 23S rRNA. Forms part of two intersubunit bridges in the 70S ribosome. The polypeptide is Large ribosomal subunit protein uL14 (Phenylobacterium zucineum (strain HLK1)).